Reading from the N-terminus, the 353-residue chain is Photosystem II protein D1 (353 aa).

Position 2 is an N-acetylthreonine (Thr2). Thr2 bears the Phosphothreonine mark. 3 helical membrane passes run 29 to 46, 118 to 133, and 142 to 156; these read YIGWFGVLMIPTLLTATS, HFLLGVACYMGREWEL, and WIAVAYSAPVAAATA. Position 118 (His118) interacts with chlorophyll a. A pheophytin a-binding site is contributed by Tyr126. [CaMn4O5] cluster-binding residues include Asp170 and Glu189. The chain crosses the membrane as a helical span at residues 197-218; sequence FHMLGVAGVFGGSLFSAMHGSL. Residue His198 participates in chlorophyll a binding. A quinone-binding positions include His215 and 264 to 265; that span reads SF. His215 lines the Fe cation pocket. Residue His272 participates in Fe cation binding. The helical transmembrane segment at 274 to 288 threads the bilayer; the sequence is FLAAWPVVGIWFTAL. His332, Glu333, Asp342, and Ala344 together coordinate [CaMn4O5] cluster. The propeptide occupies 345 to 353; that stretch reads AVEAPSING.

The protein belongs to the reaction center PufL/M/PsbA/D family. PSII is composed of 1 copy each of membrane proteins PsbA, PsbB, PsbC, PsbD, PsbE, PsbF, PsbH, PsbI, PsbJ, PsbK, PsbL, PsbM, PsbT, PsbX, PsbY, PsbZ, Psb30/Ycf12, at least 3 peripheral proteins of the oxygen-evolving complex and a large number of cofactors. It forms dimeric complexes. The D1/D2 heterodimer binds P680, chlorophylls that are the primary electron donor of PSII, and subsequent electron acceptors. It shares a non-heme iron and each subunit binds pheophytin, quinone, additional chlorophylls, carotenoids and lipids. D1 provides most of the ligands for the Mn4-Ca-O5 cluster of the oxygen-evolving complex (OEC). There is also a Cl(-1) ion associated with D1 and D2, which is required for oxygen evolution. The PSII complex binds additional chlorophylls, carotenoids and specific lipids. serves as cofactor. Post-translationally, tyr-161 forms a radical intermediate that is referred to as redox-active TyrZ, YZ or Y-Z. C-terminally processed by CTPA; processing is essential to allow assembly of the oxygen-evolving complex and thus photosynthetic growth.

It is found in the plastid. Its subcellular location is the chloroplast thylakoid membrane. The catalysed reaction is 2 a plastoquinone + 4 hnu + 2 H2O = 2 a plastoquinol + O2. Its function is as follows. Photosystem II (PSII) is a light-driven water:plastoquinone oxidoreductase that uses light energy to abstract electrons from H(2)O, generating O(2) and a proton gradient subsequently used for ATP formation. It consists of a core antenna complex that captures photons, and an electron transfer chain that converts photonic excitation into a charge separation. The D1/D2 (PsbA/PsbD) reaction center heterodimer binds P680, the primary electron donor of PSII as well as several subsequent electron acceptors. This is Photosystem II protein D1 from Chloranthus spicatus (Chulantree).